Consider the following 79-residue polypeptide: Serine protease inhibitor Kazal-type 1-like (79 aa).

An N-terminal signal peptide occupies residues 1-23 (MKVAIIFLLSALALLNLAGNTTA). Residues 26 to 79 (IGKKANCPNTLVGCPRDYDPVCGTDGKTYANECILCFENRKFGTSIRIQRRGLC) enclose the Kazal-like domain. 3 disulfide bridges follow: C32-C61, C39-C58, and C47-C79.

As to expression, seminal vesicle.

It localises to the secreted. In terms of biological role, serine protease inhibitor which exhibits anti-trypsin activity. In the pancreas, protects against trypsin-catalyzed premature activation of zymogens. Functionally, in the male reproductive tract, binds to sperm heads where it modulates sperm capacitance by inhibiting calcium uptake and nitrogen oxide (NO) production. In Rattus norvegicus (Rat), this protein is Serine protease inhibitor Kazal-type 1-like.